Reading from the N-terminus, the 401-residue chain is Zinc finger CCHC domain-containing protein 12 (401 aa).

Disordered regions lie at residues 1–20 (MASI…PLPP) and 270–292 (DSDE…SAGP). Acidic residues predominate over residues 270–282 (DSDEDVILVEPDD). Residues 345–362 (VHCSHCGEEGHSKETCDN) form a CCHC-type zinc finger.

The protein belongs to the ZCCHC12 family. Interacts with SMAD1 and CREB-binding protein (CBP). Forms a protein-DNA complex through its association with SMAD1.

Functionally, transcriptional coactivator in the bone morphogenetic protein (BMP)-signaling pathway. It positively modulates BMP signaling by interacting with SMAD1 and associating with CBP in the transcription complex. It contributes to the BMP-induced enhancement of cholinergic-neuron-specific gene expression. The polypeptide is Zinc finger CCHC domain-containing protein 12 (Zcchc12) (Rattus norvegicus (Rat)).